Consider the following 505-residue polypeptide: Lysine--tRNA ligase (505 aa).

Mg(2+) contacts are provided by Glu-415 and Glu-422.

It belongs to the class-II aminoacyl-tRNA synthetase family. In terms of assembly, homodimer. It depends on Mg(2+) as a cofactor.

The protein localises to the cytoplasm. It catalyses the reaction tRNA(Lys) + L-lysine + ATP = L-lysyl-tRNA(Lys) + AMP + diphosphate. This Escherichia coli O157:H7 protein is Lysine--tRNA ligase.